Consider the following 545-residue polypeptide: CTP synthase (545 aa).

Positions 1-266 (MTTNYIFVTG…DDYICKRFSL (266 aa)) are amidoligase domain. Position 14 (serine 14) interacts with CTP. Residue serine 14 participates in UTP binding. Residues 15-20 (SLGKGI) and aspartate 72 contribute to the ATP site. Residues aspartate 72 and glutamate 140 each coordinate Mg(2+). Residues 147-149 (DIE), 187-192 (KTKPTQ), and lysine 223 contribute to the CTP site. UTP contacts are provided by residues 187-192 (KTKPTQ) and lysine 223. 239–241 (KDV) contributes to the ATP binding site. A Glutamine amidotransferase type-1 domain is found at 291-542 (TIGMVGKYIE…VKAASEFQKR (252 aa)). Glycine 352 is a binding site for L-glutamine. The Nucleophile; for glutamine hydrolysis role is filled by cysteine 379. L-glutamine contacts are provided by residues 380–383 (LGMQ), glutamate 403, and arginine 470. Catalysis depends on residues histidine 515 and glutamate 517.

The protein belongs to the CTP synthase family. In terms of assembly, homotetramer.

It carries out the reaction UTP + L-glutamine + ATP + H2O = CTP + L-glutamate + ADP + phosphate + 2 H(+). The enzyme catalyses L-glutamine + H2O = L-glutamate + NH4(+). The catalysed reaction is UTP + NH4(+) + ATP = CTP + ADP + phosphate + 2 H(+). The protein operates within pyrimidine metabolism; CTP biosynthesis via de novo pathway; CTP from UDP: step 2/2. Its activity is regulated as follows. Allosterically activated by GTP, when glutamine is the substrate; GTP has no effect on the reaction when ammonia is the substrate. The allosteric effector GTP functions by stabilizing the protein conformation that binds the tetrahedral intermediate(s) formed during glutamine hydrolysis. Inhibited by the product CTP, via allosteric rather than competitive inhibition. In terms of biological role, catalyzes the ATP-dependent amination of UTP to CTP with either L-glutamine or ammonia as the source of nitrogen. Regulates intracellular CTP levels through interactions with the four ribonucleotide triphosphates. The protein is CTP synthase of Shigella boydii serotype 18 (strain CDC 3083-94 / BS512).